The sequence spans 289 residues: Sphingomyelinase D (289 aa).

A signal peptide spans 1-22; sequence MQSISVLICVLLALSILNFTVA. The active site involves H34. Mg(2+) is bound by residues E54, D56, and D103. An SMD-tail motif is present at residues 282-289; the sequence is ATEDDAPW.

It belongs to the sphingomyelinase D/phospholipase D family. It depends on Mg(2+) as a cofactor.

It localises to the secreted. It carries out the reaction a sphingomyelin + H2O = an N-acylsphing-4-enine 1-phosphate + choline + H(+). Sphingomyelinase activity is reduced by 33 percent following addition of EDTA. Catalyzes the hydrolysis of sphingomyelin. Sphingomyelinases D are produced by some spider in their venoms, but also by arthropods such as ticks, or pathogenic bacteria and fungi. They might play a role in pathogenicity through different mechanisms, such as membrane destabilization and host cell penetration, but also pulmonary inflammation and cutaneous lesions. This chain is Sphingomyelinase D, found in Aspergillus flavus (strain ATCC 200026 / FGSC A1120 / IAM 13836 / NRRL 3357 / JCM 12722 / SRRC 167).